Consider the following 107-residue polypeptide: MSISISDSAAQRVSAFLNHRGKGLGLRLGVRTSGCSGMAYVLEFVDEINDDDIVFEDKGVKVIIDGKSMVYLDGTELDFVKEGLNEGFKFNNPNVSNECGCGESFNV.

Fe cation-binding residues include C35, C99, and C101.

Belongs to the HesB/IscA family. In terms of assembly, homodimer; may form tetramers and higher multimers. The cofactor is Fe cation.

Functionally, is able to transfer iron-sulfur clusters to apo-ferredoxin. Multiple cycles of [2Fe2S] cluster formation and transfer are observed, suggesting that IscA acts catalytically. Recruits intracellular free iron so as to provide iron for the assembly of transient iron-sulfur cluster in IscU in the presence of IscS, L-cysteine and the thioredoxin reductase system TrxA/TrxB. The chain is Iron-binding protein IscA from Yersinia pestis bv. Antiqua (strain Angola).